Consider the following 186-residue polypeptide: Probable nicotinate-nucleotide adenylyltransferase (186 aa).

It belongs to the NadD family.

It carries out the reaction nicotinate beta-D-ribonucleotide + ATP + H(+) = deamido-NAD(+) + diphosphate. Its pathway is cofactor biosynthesis; NAD(+) biosynthesis; deamido-NAD(+) from nicotinate D-ribonucleotide: step 1/1. Catalyzes the reversible adenylation of nicotinate mononucleotide (NaMN) to nicotinic acid adenine dinucleotide (NaAD). This Thermus thermophilus (strain ATCC 27634 / DSM 579 / HB8) protein is Probable nicotinate-nucleotide adenylyltransferase.